The chain runs to 856 residues: Paladin (856 aa).

Over residues 1 to 16 (MGTTASTAQQTVSAGT) the composition is skewed to low complexity. The disordered stretch occupies residues 1–29 (MGTTASTAQQTVSAGTPFEGLQGSGTMDS). Glycine 2 carries N-myristoyl glycine lipidation. Phosphoserine is present on serine 86.

This sequence belongs to the paladin family. As to expression, expressed in endothelial cells, and in certain larger vessels, in mural cells. In the brain, possibly expressed in microglia. Expressed in peripheral blood mononuclear cells (at protein level).

It is found in the cytoplasm. The protein resides in the cytosol. The polypeptide is Paladin (PALD1) (Homo sapiens (Human)).